The chain runs to 569 residues: Glycylpeptide N-tetradecanoyltransferase (569 aa).

Basic and acidic residues predominate over residues 1–18 (MPPTEESKPVDPAQEKQA). The tract at residues 1-82 (MPPTEESKPV…STESSAEVGL (82 aa)) is disordered. The segment covering 55–68 (TKKKNKKKSKKKNK) has biased composition (basic residues). Tetradecanoyl-CoA contacts are provided by residues 158–161 (YKFW), 291–293 (LCI), and 299–303 (GKRLA). Residue Val-569 is the Proton acceptor; via carboxylate of the active site.

Belongs to the NMT family. As to quaternary structure, monomer.

It localises to the cytoplasm. The catalysed reaction is N-terminal glycyl-[protein] + tetradecanoyl-CoA = N-tetradecanoylglycyl-[protein] + CoA + H(+). Its function is as follows. Adds a myristoyl group to the N-terminal glycine residue of certain cellular proteins. In Neurospora crassa (strain ATCC 24698 / 74-OR23-1A / CBS 708.71 / DSM 1257 / FGSC 987), this protein is Glycylpeptide N-tetradecanoyltransferase (gtt-1).